The chain runs to 325 residues: Solute-binding protein RD1_1052 (325 aa).

The N-terminal stretch at 1-26 (MRLFTKIKGLAAVTCVAALASSAAFA) is a signal peptide. D-mannonate is bound by residues Glu75, 93-95 (GES), 148-151 (RGPR), Arg171, and Asn211. Residues Glu75, 93–95 (GES), 148–151 (RGPR), Arg171, and Asn211 each bind L-galactonate.

Belongs to the bacterial solute-binding protein 7 family. In terms of assembly, the complex is comprised of an extracytoplasmic solute-binding protein and a heteromeric permease formed by two transmembrane proteins.

The protein localises to the periplasm. In terms of biological role, solute-binding protein that binds L-galactonate and D-mannonate (in vitro). Probably part of a tripartite ATP-independent periplasmic (TRAP) transport system that mediates solute transport into the cytoplasm. The chain is Solute-binding protein RD1_1052 from Roseobacter denitrificans (strain ATCC 33942 / OCh 114) (Erythrobacter sp. (strain OCh 114)).